The chain runs to 242 residues: NAD(P)H-quinone oxidoreductase subunit K (242 aa).

Residues cysteine 59, cysteine 60, cysteine 124, and cysteine 155 each contribute to the [4Fe-4S] cluster site.

This sequence belongs to the complex I 20 kDa subunit family. NDH-1 can be composed of about 15 different subunits; different subcomplexes with different compositions have been identified which probably have different functions. It depends on [4Fe-4S] cluster as a cofactor.

The protein localises to the cellular thylakoid membrane. The enzyme catalyses a plastoquinone + NADH + (n+1) H(+)(in) = a plastoquinol + NAD(+) + n H(+)(out). The catalysed reaction is a plastoquinone + NADPH + (n+1) H(+)(in) = a plastoquinol + NADP(+) + n H(+)(out). Its function is as follows. NDH-1 shuttles electrons from an unknown electron donor, via FMN and iron-sulfur (Fe-S) centers, to quinones in the respiratory and/or the photosynthetic chain. The immediate electron acceptor for the enzyme in this species is believed to be plastoquinone. Couples the redox reaction to proton translocation, and thus conserves the redox energy in a proton gradient. Cyanobacterial NDH-1 also plays a role in inorganic carbon-concentration. The chain is NAD(P)H-quinone oxidoreductase subunit K from Synechococcus sp. (strain RCC307).